The following is an 862-amino-acid chain: Leucine--tRNA ligase (862 aa).

The 'HIGH' region motif lies at P42–H52. The 'KMSKS' region motif lies at K614–S618. Position 617 (K617) interacts with ATP.

This sequence belongs to the class-I aminoacyl-tRNA synthetase family.

The protein resides in the cytoplasm. The catalysed reaction is tRNA(Leu) + L-leucine + ATP = L-leucyl-tRNA(Leu) + AMP + diphosphate. The polypeptide is Leucine--tRNA ligase (Syntrophus aciditrophicus (strain SB)).